A 978-amino-acid chain; its full sequence is Macrophage colony-stimulating factor 1 receptor (978 aa).

Positions 1–19 are cleaved as a signal peptide; that stretch reads MELGPPLVLLLATVWHGQG. Residues 20 to 515 lie on the Extracellular side of the membrane; sequence APVIEPSGPE…QLPDESLFTP (496 aa). Ig-like C2-type domains lie at 24–104, 107–197, 204–298, 299–397, and 398–503; these read EPSG…VKDP, SWNL…KVNR, QIKL…VVES, AYLN…LTLR, and YPPE…SLGQ. 3 cysteine pairs are disulfide-bonded: C42–C84, C127–C177, and C224–C278. N-linked (GlcNAc...) asparagine glycans are attached at residues N45 and N73. N-linked (GlcNAc...) asparagine glycans are attached at residues N302, N335, N389, N410, N449, N478, and N491. A disulfide bridge connects residues C417 and C483. A helical transmembrane segment spans residues 516–536; it reads VVVACMSVMSLLVLLLLLLLY. Residues 537 to 978 lie on the Cytoplasmic side of the membrane; it reads KYKQKPKYQV…LQPNNYQFAC (442 aa). Residues 540 to 572 are regulatory juxtamembrane domain; that stretch reads QKPKYQVRWKIIERYEGNSYTFIDPTQLPYNEK. Y544 and Y559 each carry phosphotyrosine; by autocatalysis. The Protein kinase domain maps to 580-914; that stretch reads LQFGKTLGAG…CFLLQEQARL (335 aa). ATP-binding positions include 586 to 594 and K614; that span reads LGAGAFGKV. Phosphotyrosine; by autocatalysis is present on residues Y697 and Y706. S711 carries the post-translational modification Phosphoserine. Y721 is modified (phosphotyrosine; by autocatalysis). D776 serves as the catalytic Proton acceptor. An activation loop region spans residues 794–816; sequence DFGLARDIMNDSNYVVKGNARLP. Y807 and Y921 each carry phosphotyrosine; by autocatalysis. A disordered region spans residues 921–957; the sequence is YANLPSSGGSSGSDSGGGSSGGSSSEPEEESSSEHLA. Gly residues predominate over residues 929-941; it reads GSSGSDSGGGSSG. Y974 bears the Phosphotyrosine; by autocatalysis mark.

The protein belongs to the protein kinase superfamily. Tyr protein kinase family. CSF-1/PDGF receptor subfamily. In terms of assembly, monomer. Homodimer. Interacts with CSF1 and IL34. Interaction with dimeric CSF1 or IL34 leads to receptor homodimerization. Interacts with INPPL1/SHIP2 and THOC5. Interacts (tyrosine phosphorylated) with PLCG2 (via SH2 domain). Interacts (tyrosine phosphorylated) with PIK3R1 (via SH2 domain). Interacts (tyrosine phosphorylated) with FYN, YES1 and SRC (via SH2 domain). Interacts (tyrosine phosphorylated) with CBL, GRB2 and SLA2. Post-translationally, autophosphorylated in response to CSF1 or IL34 binding. Phosphorylation at Tyr-559 is important for normal down-regulation of signaling by ubiquitination, internalization and degradation. Phosphorylation at Tyr-559 and Tyr-807 is important for interaction with SRC family members, including FYN, YES1 and SRC, and for subsequent activation of these protein kinases. Phosphorylation at Tyr-697 and Tyr-921 is important for interaction with GRB2. Phosphorylation at Tyr-721 is important for interaction with PIK3R1. Phosphorylation at Tyr-721 and Tyr-807 is important for interaction with PLCG2. Phosphorylation at Tyr-974 is important for interaction with CBL. Dephosphorylation by PTPN2 negatively regulates downstream signaling and macrophage differentiation. Ubiquitinated. Becomes rapidly polyubiquitinated after autophosphorylation, leading to its degradation.

The protein resides in the cell membrane. It carries out the reaction L-tyrosyl-[protein] + ATP = O-phospho-L-tyrosyl-[protein] + ADP + H(+). Present in an inactive conformation in the absence of bound ligand. CSF1 or IL34 binding leads to dimerization and activation by autophosphorylation on tyrosine residues. Functionally, tyrosine-protein kinase that acts as a cell-surface receptor for CSF1 and IL34 and plays an essential role in the regulation of survival, proliferation and differentiation of hematopoietic precursor cells, especially mononuclear phagocytes, such as macrophages and monocytes. Promotes the release of pro-inflammatory chemokines in response to IL34 and CSF1, and thereby plays an important role in innate immunity and in inflammatory processes. Plays an important role in the regulation of osteoclast proliferation and differentiation, the regulation of bone resorption, and is required for normal bone and tooth development. Required for normal male and female fertility, and for normal development of milk ducts and acinar structures in the mammary gland during pregnancy. Promotes reorganization of the actin cytoskeleton, regulates formation of membrane ruffles, cell adhesion and cell migration, and promotes cancer cell invasion. Activates several signaling pathways in response to ligand binding, including the ERK1/2 and the JNK pathway. Phosphorylates PIK3R1, PLCG2, GRB2, SLA2 and CBL. Activation of PLCG2 leads to the production of the cellular signaling molecules diacylglycerol and inositol 1,4,5-trisphosphate, that then lead to the activation of protein kinase C family members, especially PRKCD. Phosphorylation of PIK3R1, the regulatory subunit of phosphatidylinositol 3-kinase, leads to activation of the AKT1 signaling pathway. Activated CSF1R also mediates activation of the MAP kinases MAPK1/ERK2 and/or MAPK3/ERK1, and of the SRC family kinases SRC, FYN and YES1. Activated CSF1R transmits signals both via proteins that directly interact with phosphorylated tyrosine residues in its intracellular domain, or via adapter proteins, such as GRB2. Promotes activation of STAT family members STAT3, STAT5A and/or STAT5B. Promotes tyrosine phosphorylation of SHC1 and INPP5D/SHIP-1. Receptor signaling is down-regulated by protein phosphatases, such as INPP5D/SHIP-1, that dephosphorylate the receptor and its downstream effectors, and by rapid internalization of the activated receptor. In the central nervous system, may play a role in the development of microglia macrophages. This chain is Macrophage colony-stimulating factor 1 receptor (Csf1r), found in Rattus norvegicus (Rat).